We begin with the raw amino-acid sequence, 177 residues long: Small ribosomal subunit protein uS5 (177 aa).

An S5 DRBM domain is found at 21 to 84 (LKEKMISVNR…DEARRGMIKI (64 aa)).

The protein belongs to the universal ribosomal protein uS5 family. As to quaternary structure, part of the 30S ribosomal subunit. Contacts proteins S4 and S8.

Its function is as follows. With S4 and S12 plays an important role in translational accuracy. In terms of biological role, located at the back of the 30S subunit body where it stabilizes the conformation of the head with respect to the body. The polypeptide is Small ribosomal subunit protein uS5 (Nitrosomonas eutropha (strain DSM 101675 / C91 / Nm57)).